Here is a 130-residue protein sequence, read N- to C-terminus: Small ribosomal subunit protein uS11 (130 aa).

The tract at residues 111–130 (IRDVTPVPHNGSRPPKRRRA) is disordered.

It belongs to the universal ribosomal protein uS11 family. Part of the 30S ribosomal subunit. Interacts with proteins S7 and S18. Binds to IF-3.

In terms of biological role, located on the platform of the 30S subunit, it bridges several disparate RNA helices of the 16S rRNA. Forms part of the Shine-Dalgarno cleft in the 70S ribosome. The polypeptide is Small ribosomal subunit protein uS11 (Lactobacillus acidophilus (strain ATCC 700396 / NCK56 / N2 / NCFM)).